An 892-amino-acid chain; its full sequence is Phenylalanine--tRNA ligase beta subunit (892 aa).

Residues 39 to 150 (NPGVEGVVVG…PGLEPGMDVA (112 aa)) form the tRNA-binding domain. Positions 406–569 (AVPPVILLRT…RCEGYDAIPL (164 aa)) constitute a B5 domain. An insert region spans residues 442–518 (VLTPADLAAD…ALLGGGESDG (77 aa)). Positions 547, 553, 556, and 557 each coordinate Mg(2+). The region spanning 799–891 (PRFPAVTRDV…ALKALGAELR (93 aa)) is the FDX-ACB domain.

Belongs to the phenylalanyl-tRNA synthetase beta subunit family. Type 1 subfamily. In terms of assembly, tetramer of two alpha and two beta subunits. Mg(2+) is required as a cofactor.

The protein localises to the cytoplasm. It catalyses the reaction tRNA(Phe) + L-phenylalanine + ATP = L-phenylalanyl-tRNA(Phe) + AMP + diphosphate + H(+). The protein is Phenylalanine--tRNA ligase beta subunit of Symbiobacterium thermophilum (strain DSM 24528 / JCM 14929 / IAM 14863 / T).